Here is a 335-residue protein sequence, read N- to C-terminus: tRNA N6-adenosine threonylcarbamoyltransferase (335 aa).

2 residues coordinate Fe cation: histidine 111 and histidine 115. Residues 133 to 137 (LISGG), aspartate 166, glycine 179, and asparagine 276 contribute to the substrate site. Aspartate 301 provides a ligand contact to Fe cation.

This sequence belongs to the KAE1 / TsaD family. It depends on Fe(2+) as a cofactor.

The protein resides in the cytoplasm. It catalyses the reaction L-threonylcarbamoyladenylate + adenosine(37) in tRNA = N(6)-L-threonylcarbamoyladenosine(37) in tRNA + AMP + H(+). In terms of biological role, required for the formation of a threonylcarbamoyl group on adenosine at position 37 (t(6)A37) in tRNAs that read codons beginning with adenine. Is involved in the transfer of the threonylcarbamoyl moiety of threonylcarbamoyl-AMP (TC-AMP) to the N6 group of A37, together with TsaE and TsaB. TsaD likely plays a direct catalytic role in this reaction. The sequence is that of tRNA N6-adenosine threonylcarbamoyltransferase from Wolbachia sp. subsp. Brugia malayi (strain TRS).